The following is a 463-amino-acid chain: Glutamate--tRNA ligase 1 (463 aa).

The 'HIGH' region signature appears at 10-20; it reads PSPTGYLHIGG. The 'KMSKS' region motif lies at 238–242; the sequence is KLSKR. Lys-241 serves as a coordination point for ATP.

It belongs to the class-I aminoacyl-tRNA synthetase family. Glutamate--tRNA ligase type 1 subfamily. Monomer.

The protein localises to the cytoplasm. The catalysed reaction is tRNA(Glu) + L-glutamate + ATP = L-glutamyl-tRNA(Glu) + AMP + diphosphate. Its function is as follows. Catalyzes the attachment of glutamate to tRNA(Glu) in a two-step reaction: glutamate is first activated by ATP to form Glu-AMP and then transferred to the acceptor end of tRNA(Glu). In Helicobacter pylori (strain G27), this protein is Glutamate--tRNA ligase 1.